A 226-amino-acid polypeptide reads, in one-letter code: MTELLRCEKISKFYEEGSQSVQVLNDVSFTINTGGLVAIVGSSGSGKSTLLHILGGLDKPTTGEVWINRQSLQQLSANQLAELRNQQLGFVYQFHHLMADFTALENVMMPMLIGKQNKREAADLAEKMLQAVGLQHRICHRPAALSGGERQRVAIARALVNKPALVLADEPTGNLDQKTTESIFELIKQLNIEQNIAFLLVTHDLKLADKLTRRLIMADGVLREAS.

One can recognise an ABC transporter domain in the interval 5–226; that stretch reads LRCEKISKFY…MADGVLREAS (222 aa). An ATP-binding site is contributed by 41-48; the sequence is GSSGSGKS.

This sequence belongs to the ABC transporter superfamily. Lipoprotein translocase (TC 3.A.1.125) family. In terms of assembly, the complex is composed of two ATP-binding proteins (LolD) and two transmembrane proteins (LolC and LolE).

It is found in the cell inner membrane. In terms of biological role, part of the ABC transporter complex LolCDE involved in the translocation of mature outer membrane-directed lipoproteins, from the inner membrane to the periplasmic chaperone, LolA. Responsible for the formation of the LolA-lipoprotein complex in an ATP-dependent manner. This chain is Lipoprotein-releasing system ATP-binding protein LolD, found in Haemophilus ducreyi (strain 35000HP / ATCC 700724).